Here is a 646-residue protein sequence, read N- to C-terminus: Threonine--tRNA ligase (646 aa).

The region spanning 1–61 is the TGS domain; that stretch reads MIKITFPDGS…NEDADFVLYK (61 aa). The segment at 242–541 is catalytic; that stretch reads DHRKIGKEMQ…LIEHTAGKFP (300 aa). Positions 337, 388, and 518 each coordinate Zn(2+).

This sequence belongs to the class-II aminoacyl-tRNA synthetase family. Homodimer. Zn(2+) is required as a cofactor.

It localises to the cytoplasm. It catalyses the reaction tRNA(Thr) + L-threonine + ATP = L-threonyl-tRNA(Thr) + AMP + diphosphate + H(+). Its function is as follows. Catalyzes the attachment of threonine to tRNA(Thr) in a two-step reaction: L-threonine is first activated by ATP to form Thr-AMP and then transferred to the acceptor end of tRNA(Thr). Also edits incorrectly charged L-seryl-tRNA(Thr). The polypeptide is Threonine--tRNA ligase (Bacteroides thetaiotaomicron (strain ATCC 29148 / DSM 2079 / JCM 5827 / CCUG 10774 / NCTC 10582 / VPI-5482 / E50)).